The sequence spans 474 residues: PRAME family member 1 (474 aa).

One copy of the LRR 1; degenerate repeat lies at 97–124 (RWKLQVLDLRDVDENFWARWPGAWALSC). The LRR 2; degenerate repeat unit spans residues 179–203 (HLCCSKLVNYLTPIKYLRKSLKIIY). The LRR 3; degenerate repeat unit spans residues 204-230 (LNSIQELEIRNMSWPRLIRKLRCYLKE). An LRR 4; degenerate repeat occupies 231-265 (MKNLRKLVFSRCHHYTSDNELEGRLVAKFSSVFLR). LRR repeat units follow at residues 266–291 (LEHLQLLKIKLITFFSGHLEQLIRCL), 292–323 (QNPLENLELTYGYLLEEDMKCLSQYPSLGYLK), 324–342 (HLNLSYVLLFRISLEPLGA), 348–375 (AASLKTLILEGCQIHYSQLSAILPGLSR), and 376–400 (CSQLTTFYFGRNCMSIDALKDLLRH).

Belongs to the PRAME family.

This chain is PRAME family member 1, found in Homo sapiens (Human).